The chain runs to 453 residues: Chromosomal replication initiator protein DnaA (453 aa).

A domain I, interacts with DnaA modulators region spans residues 1 to 74 (MKEKQFWNRI…GFEIYDAEIT (74 aa)). The segment at 74-113 (TPHYIFTKPQDTTSSQVEEATNLTLYDYSPKLVSIPYSDT) is domain II. Residues 114-331 (GLKEKYTFDN…GAINDITLIA (218 aa)) form a domain III, AAA+ region region. 4 residues coordinate ATP: G158, G160, K161, and T162. The interval 332 to 453 (RVKKIKDITI…EIESIKKKIK (122 aa)) is domain IV, binds dsDNA.

This sequence belongs to the DnaA family. As to quaternary structure, oligomerizes as a right-handed, spiral filament on DNA at oriC.

Its subcellular location is the cytoplasm. Plays an essential role in the initiation and regulation of chromosomal replication. ATP-DnaA binds to the origin of replication (oriC) to initiate formation of the DNA replication initiation complex once per cell cycle. Binds the DnaA box (a 9 base pair repeat at the origin) and separates the double-stranded (ds)DNA. Forms a right-handed helical filament on oriC DNA; dsDNA binds to the exterior of the filament while single-stranded (ss)DNA is stabiized in the filament's interior. The ATP-DnaA-oriC complex binds and stabilizes one strand of the AT-rich DNA unwinding element (DUE), permitting loading of DNA polymerase. After initiation quickly degrades to an ADP-DnaA complex that is not apt for DNA replication. Binds acidic phospholipids. The sequence is that of Chromosomal replication initiator protein DnaA from Streptococcus pneumoniae (strain P1031).